The chain runs to 570 residues: Glutamate--tRNA ligase, chloroplastic/mitochondrial (570 aa).

The N-terminal 39 residues, 1–39 (MASLVYGTPWLRVRSLPELAPAFLRRRQSSLFYCSRRSF), are a transit peptide targeting the chloroplast and mitochondrion. L-glutamate is bound at residue 57 to 59 (RFA). The 'HIGH' region motif lies at 60–70 (PSPTGNLHVGG). An ATP-binding site is contributed by His-67. L-glutamate is bound by residues Glu-93, 245–249 (YNFCV), and Arg-263. ATP-binding positions include Glu-266 and 301–305 (KLSKR). The 'KMSKS' region signature appears at 301-305 (KLSKR).

Belongs to the class-I aminoacyl-tRNA synthetase family. Glutamate--tRNA ligase type 1 subfamily.

Its subcellular location is the plastid. It is found in the chloroplast. The protein localises to the mitochondrion. The enzyme catalyses tRNA(Glu) + L-glutamate + ATP = L-glutamyl-tRNA(Glu) + AMP + diphosphate. Functionally, catalyzes the attachment of glutamate to tRNA(Glu) in a two-step reaction: glutamate is first activated by ATP to form Glu-AMP and then transferred to the acceptor end of tRNA(Glu). The sequence is that of Glutamate--tRNA ligase, chloroplastic/mitochondrial from Arabidopsis thaliana (Mouse-ear cress).